The chain runs to 212 residues: Anaphase-promoting complex subunit 10 (212 aa).

The 185-residue stretch at 12–196 folds into the DOC domain; the sequence is MDEEERTSSR…PSAVLEARPG (185 aa).

It belongs to the APC10 family. As to quaternary structure, the APC/C complex is probably composed of at least 12 subunits: apc-2, apc-10, apc-11, cdc-26, emb-1, emb-27, emb-30, mat-1, mat-2, mat-3, such-1 and gfi-3.

The protein operates within protein modification; protein ubiquitination. Probable component of the anaphase promoting complex/cyclosome (APC/C), a cell cycle-regulated E3 ubiquitin ligase that controls progression through mitosis and the G1 phase of the cell cycle. The APC/C complex acts by mediating ubiquitination and subsequent degradation of target proteins. The polypeptide is Anaphase-promoting complex subunit 10 (Caenorhabditis elegans).